The sequence spans 592 residues: Putative RING finger protein ORF9 (592 aa).

An RING-type zinc finger spans residues 12-49; that stretch reads CCICLEEDIERVDTIPCQHTVCRPCYLKPMINKCPVCR. The stretch at 414-441 forms a coiled coil; sequence WELIKREELLQRRYKREEQNLKYTSNRL.

This chain is Putative RING finger protein ORF9, found in Ostreid herpesvirus 1 (isolate France) (OsHV-1).